The following is a 103-amino-acid chain: DNA-directed RNA polymerase subunit omega (103 aa).

The segment at 52-103 (EIESGNVTIHPDPEGKREAVRRRIEEEKRRKEEEEKKIKEQIAKEKEDGEKI) is disordered. Positions 62 to 103 (PDPEGKREAVRRRIEEEKRRKEEEEKKIKEQIAKEKEDGEKI) are enriched in basic and acidic residues.

This sequence belongs to the RNA polymerase subunit omega family. The RNAP catalytic core consists of 2 alpha, 1 beta, 1 beta' and 1 omega subunit. When a sigma factor is associated with the core the holoenzyme is formed, which can initiate transcription.

It carries out the reaction RNA(n) + a ribonucleoside 5'-triphosphate = RNA(n+1) + diphosphate. Functionally, promotes RNA polymerase assembly. Latches the N- and C-terminal regions of the beta' subunit thereby facilitating its interaction with the beta and alpha subunits. This Streptococcus pneumoniae serotype 19F (strain G54) protein is DNA-directed RNA polymerase subunit omega.